A 793-amino-acid polypeptide reads, in one-letter code: Ent-copalyl diphosphate synthase, chloroplastic (793 aa).

A chloroplast-targeting transit peptide spans 1–47 (MPLASNPVAFLPSSTAHGDLPAAAFSRSSAGCLQLCRPLTPTSSLQC). The Mg(2+) site is built by D372 and D374. The DXDD motif motif lies at 372-375 (DIDD).

This sequence belongs to the terpene synthase family. Mg(2+) is required as a cofactor.

It is found in the plastid. Its subcellular location is the chloroplast. It carries out the reaction (2E,6E,10E)-geranylgeranyl diphosphate = ent-copalyl diphosphate. It functions in the pathway plant hormone biosynthesis; gibberellin biosynthesis. Functionally, catalyzes the conversion of geranylgeranyl diphosphate (GGPP) to the gibberellin precursor ent-copalyl diphosphate (CPP). This chain is Ent-copalyl diphosphate synthase, chloroplastic, found in Salvia miltiorrhiza (Chinese sage).